The primary structure comprises 26 residues: Aralin B chain (26 aa).

In terms of assembly, disulfide-linked dimer of A and B chains. In terms of processing, glycosylated. High-mannose type oligosaccharides.

Its function is as follows. Lectin specific for galactose (Gal) and its derivatives. Induces apoptosis. Has cytotoxic activity against several human cancer cell lines. Is less cytotoxic to normal human cells. The protein is Aralin B chain of Aralia elata (Japanese angelica tree).